The sequence spans 140 residues: Large ribosomal subunit protein uL11 (140 aa).

The protein belongs to the universal ribosomal protein uL11 family. In terms of assembly, part of the ribosomal stalk of the 50S ribosomal subunit. Interacts with L10 and the large rRNA to form the base of the stalk. L10 forms an elongated spine to which L12 dimers bind in a sequential fashion forming a multimeric L10(L12)X complex. In terms of processing, one or more lysine residues are methylated.

Forms part of the ribosomal stalk which helps the ribosome interact with GTP-bound translation factors. The sequence is that of Large ribosomal subunit protein uL11 from Pelobacter propionicus (strain DSM 2379 / NBRC 103807 / OttBd1).